The primary structure comprises 111 residues: WAP four-disulfide core domain protein 12 (111 aa).

An N-terminal signal peptide occupies residues 1–23; the sequence is MGSSSFLVLMVSLALVTLVVVEG. One can recognise a WAP domain in the interval 27-74; the sequence is GIEKAGVCPADNVRCFKSNPPQCHTDQDCLGERKCCYLHCGFKCVIPV. 4 disulfide bridges follow: cysteine 34/cysteine 62, cysteine 41/cysteine 66, cysteine 49/cysteine 61, and cysteine 55/cysteine 70. Residues 80 to 111 form a disordered region; the sequence is GGNKDEDVSGPHPEPGWEAKSPGSSSTGCPQI. Polar residues predominate over residues 101–111; it reads PGSSSTGCPQI.

Its subcellular location is the secreted. Functionally, antibacterial protein. Putative acid-stable proteinase inhibitor. The sequence is that of WAP four-disulfide core domain protein 12 (WFDC12) from Colobus guereza (Mantled guereza).